An 882-amino-acid polypeptide reads, in one-letter code: Nitrogen regulatory protein areA (882 aa).

Over residues M1–G13 the composition is skewed to gly residues. 7 disordered regions span residues M1–L75, K139–D191, S228–G257, N325–D344, S394–M422, N461–G545, and M579–T675. Over residues S48–F59 the composition is skewed to low complexity. Polar residues-rich tracts occupy residues N156–S169 and P177–D191. Basic residues predominate over residues N325 to H334. Polar residues-rich tracts occupy residues S394–Q413 and Q492–A503. Over residues V604–R613 the composition is skewed to basic and acidic residues. Positions A617 to P642 are enriched in polar residues. Residues C676–C700 form a GATA-type zinc finger. Residues R723–A871 form a disordered region. A compositionally biased stretch (low complexity) spans K745 to S759. Polar residues predominate over residues N795–Q811. The segment covering A848 to A861 has biased composition (low complexity).

It is found in the nucleus. Major nitrogen regulatory protein. Positively acting regulatory gene of nitrogen metabolite repression. The polypeptide is Nitrogen regulatory protein areA (areA) (Aspergillus niger).